A 293-amino-acid polypeptide reads, in one-letter code: MHKDIATPGRTKEILARYGFSFKKSLGQNFLIDTNILRKIVDAAGISGDTGAIEIGPGIGALTEQLARRAKKVVAFEIDSRLLPILADTLSAYDNVRIIHQDVLKADLHAVIAEEFAEVSDRMVVANLPYYVTTPIIMKLLTERLPIRGMVVMMQKEVADRLAAKPGTKDYGSLTIAVQYYTEAEVVMTVPRTVFMPQPNVDSAVIRLTKRSHPPVAVEDEEVFFQVVRASFAQRRKTLLNNLLNNLPDGKEKKEQIERALDAVGIDPRRRGETLDMAEFASLSNALMPLFRV.

Residues Asn-29, Leu-31, Gly-56, Glu-77, Asp-102, and Asn-127 each contribute to the S-adenosyl-L-methionine site.

Belongs to the class I-like SAM-binding methyltransferase superfamily. rRNA adenine N(6)-methyltransferase family. RsmA subfamily.

Its subcellular location is the cytoplasm. The enzyme catalyses adenosine(1518)/adenosine(1519) in 16S rRNA + 4 S-adenosyl-L-methionine = N(6)-dimethyladenosine(1518)/N(6)-dimethyladenosine(1519) in 16S rRNA + 4 S-adenosyl-L-homocysteine + 4 H(+). In terms of biological role, specifically dimethylates two adjacent adenosines (A1518 and A1519) in the loop of a conserved hairpin near the 3'-end of 16S rRNA in the 30S particle. May play a critical role in biogenesis of 30S subunits. This Geobacillus thermodenitrificans (strain NG80-2) protein is Ribosomal RNA small subunit methyltransferase A.